The primary structure comprises 286 residues: 2-dehydro-3-deoxyphosphooctonate aldolase (286 aa).

The protein belongs to the KdsA family.

Its subcellular location is the cytoplasm. The enzyme catalyses D-arabinose 5-phosphate + phosphoenolpyruvate + H2O = 3-deoxy-alpha-D-manno-2-octulosonate-8-phosphate + phosphate. It functions in the pathway carbohydrate biosynthesis; 3-deoxy-D-manno-octulosonate biosynthesis; 3-deoxy-D-manno-octulosonate from D-ribulose 5-phosphate: step 2/3. The protein operates within bacterial outer membrane biogenesis; lipopolysaccharide biosynthesis. The polypeptide is 2-dehydro-3-deoxyphosphooctonate aldolase (Bradyrhizobium sp. (strain BTAi1 / ATCC BAA-1182)).